The following is a 105-amino-acid chain: Large ribosomal subunit protein uL23 (105 aa).

The protein belongs to the universal ribosomal protein uL23 family. As to quaternary structure, part of the 50S ribosomal subunit. Contacts protein L29, and trigger factor when it is bound to the ribosome.

One of the early assembly proteins it binds 23S rRNA. One of the proteins that surrounds the polypeptide exit tunnel on the outside of the ribosome. Forms the main docking site for trigger factor binding to the ribosome. The polypeptide is Large ribosomal subunit protein uL23 (Herminiimonas arsenicoxydans).